Reading from the N-terminus, the 338-residue chain is tRNA N6-adenosine threonylcarbamoyltransferase (338 aa).

Fe cation is bound by residues histidine 111 and histidine 115. Residues leucine 134–glycine 138, aspartate 167, glycine 180, and asparagine 272 each bind substrate. Aspartate 300 is a binding site for Fe cation.

The protein belongs to the KAE1 / TsaD family. Fe(2+) serves as cofactor.

The protein resides in the cytoplasm. The enzyme catalyses L-threonylcarbamoyladenylate + adenosine(37) in tRNA = N(6)-L-threonylcarbamoyladenosine(37) in tRNA + AMP + H(+). Functionally, required for the formation of a threonylcarbamoyl group on adenosine at position 37 (t(6)A37) in tRNAs that read codons beginning with adenine. Is involved in the transfer of the threonylcarbamoyl moiety of threonylcarbamoyl-AMP (TC-AMP) to the N6 group of A37, together with TsaE and TsaB. TsaD likely plays a direct catalytic role in this reaction. In Shewanella sp. (strain ANA-3), this protein is tRNA N6-adenosine threonylcarbamoyltransferase.